Consider the following 250-residue polypeptide: 3-deoxy-manno-octulosonate cytidylyltransferase (250 aa).

The protein belongs to the KdsB family.

It is found in the cytoplasm. It carries out the reaction 3-deoxy-alpha-D-manno-oct-2-ulosonate + CTP = CMP-3-deoxy-beta-D-manno-octulosonate + diphosphate. Its pathway is nucleotide-sugar biosynthesis; CMP-3-deoxy-D-manno-octulosonate biosynthesis; CMP-3-deoxy-D-manno-octulosonate from 3-deoxy-D-manno-octulosonate and CTP: step 1/1. The protein operates within bacterial outer membrane biogenesis; lipopolysaccharide biosynthesis. Functionally, activates KDO (a required 8-carbon sugar) for incorporation into bacterial lipopolysaccharide in Gram-negative bacteria. In Thioalkalivibrio sulfidiphilus (strain HL-EbGR7), this protein is 3-deoxy-manno-octulosonate cytidylyltransferase.